The sequence spans 194 residues: Putative 3-methyladenine DNA glycosylase (194 aa).

This sequence belongs to the DNA glycosylase MPG family.

The polypeptide is Putative 3-methyladenine DNA glycosylase (Anaeromyxobacter sp. (strain Fw109-5)).